The primary structure comprises 2462 residues: Piezo-type mechanosensitive ion channel homolog (2462 aa).

Helical transmembrane passes span 5–25 (LVGFLLPSLLLAAALINWSVI), 27–47 (FLDLIAFLLVHYIAPEIGYRF), 57–77 (IFIFSFAVFLAQVVYLVIWAA), 105–125 (TVMYFLALQLLTSLVALADIY), 163–183 (AVQLAVGICNPSWVSLPFFIG), 207–227 (LYIYAGFNIVLLYLYQLPINF), 248–268 (EGPDICSGLFLVLFYIMLSYV), 325–345 (FFTYGFPVSLFALSFWSFHFA), 347–367 (LCAFGLLAYVGYIIYAFPSLF), 374–394 (GLLLVFILLWAVSTYIFNVAF), 404–424 (FGLGMLVALGNLVNNSVFLYL), 467–487 (LIFLIAMKPGFFHAVYVIFFL), 502–522 (SLILLCEVHFALLYILEIDLV), 554–574 (IALLACFCAIHNHGFEVLFSF), 653–673 (VYLVKPNYVSFGYIFLLLLWI), 694–714 (AVLVFMFIYCLSSFVSLQLWL), 730–750 (APLLDNVWESLAVLIVMQLYS), 792–812 (FYASLSPISVFGFVYLLGLVI), and 826–846 (SFLIYTGFLVSAEYLFQLWGM). Residues 927–947 (ASVSSSNGENPSSTDHASISM) form a disordered region. The span at 928 to 939 (SVSSSNGENPSS) shows a compositional bias: low complexity. The next 8 membrane-spanning stretches (helical) occupy residues 1027–1047 (FWIENMFNLYGLEINMIALLL), 1050–1070 (FALLNAISMVYIALLAACVLL), 1078–1098 (LWPVVVFLFASILAIEYVATW), 1143–1160 (TLISYFVVFMLACFKLRA), 1204–1224 (LYCYVHLLDVVLILILITGTL), 1228–1248 (ILHLGYLAFALVFARMRLEIL), 1260–1280 (VYNFVLIIFSLAYQSPFVGNF), and 1310–1330 (SALVEIIIFMLVSLQSYMFSS). The stretch at 1347–1400 (AIVREQEKKAARKTEQLQQIREAEEKKRQRNLQVEKMKSEMLNLRVQLHRMNSD) forms a coiled coil. The segment at 1543 to 1583 (SDTNEQSSVDDEVYDEMESQKRKHTPFERSTSLQSDRSSDG) is disordered. Residues 1550–1559 (SVDDEVYDEM) show a composition bias toward acidic residues. Positions 1570 to 1583 (ERSTSLQSDRSSDG) are enriched in polar residues. 8 helical membrane passes run 1611-1631 (FIIAFLWNFSLLSMVYLAALF), 1647-1667 (VIMLMYTEIYILLQYLYQIII), 1916-1936 (YIFGADLIVFFLVAIFYQSVI), 1956-1976 (FVIILMVIFFLIVVDRVIYLC), 1984-2004 (VYYLFSLILFTYAVTEYAWSI), 2012-2032 (AGLALRIIFLAKAMSLALQAI), 2130-2150 (GICLFFILLCVIWAPMLMYSS), and 2369-2389 (FLGDTLSKFSIWGLYITFVLA).

Belongs to the PIEZO (TC 1.A.75) family.

Its subcellular location is the membrane. Its function is as follows. Pore-forming subunit of a mechanosensitive non-specific cation channel, that conducts both sodium and potassium ions. This Arabidopsis thaliana (Mouse-ear cress) protein is Piezo-type mechanosensitive ion channel homolog.